We begin with the raw amino-acid sequence, 62 residues long: Large ribosomal subunit protein bL28 (62 aa).

It belongs to the bacterial ribosomal protein bL28 family.

This chain is Large ribosomal subunit protein bL28, found in Parafrankia sp. (strain EAN1pec).